Consider the following 457-residue polypeptide: MDLAAVILAAGRGTRMKSKLPKVLHRVCGRPMLSYIVNAVAAAGIKKIVVVAGYGAEQVAREVEGLAQVALQAEQLGTAHALLQAGPFLSGFAGKVLVLCGDTPLIEAGTLAKLAGFHRTAGAAATLLTAEPDDPAGYGRVIRDGRGNVIKIVEEKDASPAEKLIREINTGIYCFEAAGLFDALKGIRPANAQGEYYLTDIVEIYVRAGLAVAAFKLENPVEVTGINDRRQLAEVEKYLRRRVLEDLMQSGVTVLDPASTFVDGTVRVGRDTVIYPFTFLEGSTIIGEDCVIGPGSRLVNAVVGNGVSVQNSVVIESQIGDCCSIGPFAYLRPETRLGRNVKVGDFVEIKKSVIGDGSKVPHLSYVGDATVGAGVNIGCGTITCNYDGRNKWPTRIGDGAFIGSNTNLVAPVEIGAGAVTGAGSTITKNVPDGALAVERARQVLVPDWAAKKRDKKV.

A pyrophosphorylase region spans residues 1–229 (MDLAAVILAA…PVEVTGINDR (229 aa)). Residues 8 to 11 (LAAG), lysine 22, glutamine 72, and 77 to 78 (GT) each bind UDP-N-acetyl-alpha-D-glucosamine. Aspartate 102 serves as a coordination point for Mg(2+). Residues glycine 139, glutamate 154, asparagine 169, and asparagine 227 each contribute to the UDP-N-acetyl-alpha-D-glucosamine site. Asparagine 227 serves as a coordination point for Mg(2+). The tract at residues 230-250 (RQLAEVEKYLRRRVLEDLMQS) is linker. Residues 251 to 457 (GVTVLDPAST…WAAKKRDKKV (207 aa)) are N-acetyltransferase. Arginine 332 and lysine 350 together coordinate UDP-N-acetyl-alpha-D-glucosamine. Residue histidine 362 is the Proton acceptor of the active site. UDP-N-acetyl-alpha-D-glucosamine is bound by residues tyrosine 365 and asparagine 376. Acetyl-CoA is bound by residues 385–386 (NY), serine 404, alanine 422, and arginine 439.

The protein in the N-terminal section; belongs to the N-acetylglucosamine-1-phosphate uridyltransferase family. This sequence in the C-terminal section; belongs to the transferase hexapeptide repeat family. Homotrimer. It depends on Mg(2+) as a cofactor.

It is found in the cytoplasm. The enzyme catalyses alpha-D-glucosamine 1-phosphate + acetyl-CoA = N-acetyl-alpha-D-glucosamine 1-phosphate + CoA + H(+). The catalysed reaction is N-acetyl-alpha-D-glucosamine 1-phosphate + UTP + H(+) = UDP-N-acetyl-alpha-D-glucosamine + diphosphate. It functions in the pathway nucleotide-sugar biosynthesis; UDP-N-acetyl-alpha-D-glucosamine biosynthesis; N-acetyl-alpha-D-glucosamine 1-phosphate from alpha-D-glucosamine 6-phosphate (route II): step 2/2. Its pathway is nucleotide-sugar biosynthesis; UDP-N-acetyl-alpha-D-glucosamine biosynthesis; UDP-N-acetyl-alpha-D-glucosamine from N-acetyl-alpha-D-glucosamine 1-phosphate: step 1/1. The protein operates within bacterial outer membrane biogenesis; LPS lipid A biosynthesis. In terms of biological role, catalyzes the last two sequential reactions in the de novo biosynthetic pathway for UDP-N-acetylglucosamine (UDP-GlcNAc). The C-terminal domain catalyzes the transfer of acetyl group from acetyl coenzyme A to glucosamine-1-phosphate (GlcN-1-P) to produce N-acetylglucosamine-1-phosphate (GlcNAc-1-P), which is converted into UDP-GlcNAc by the transfer of uridine 5-monophosphate (from uridine 5-triphosphate), a reaction catalyzed by the N-terminal domain. The sequence is that of Bifunctional protein GlmU from Pelotomaculum thermopropionicum (strain DSM 13744 / JCM 10971 / SI).